The primary structure comprises 1088 residues: Extended synaptotagmin-1 (1088 aa).

The residue at position 1 (Met-1) is an N-acetylmethionine. Residues 1–30 (MERSPEEGAGPEPSGQSPATDSTRERDGGS) are Cytoplasmic-facing. Positions 1–38 (MERSPEEGAGPEPSGQSPATDSTRERDGGSGVPPAGPG) are disordered. Residues 31-51 (GVPPAGPGAASEALAVLTSFG) traverse the membrane as a helical segment. At 52-54 (RRL) the chain is on the lumenal side. Residues 55–75 (LVLVPVYLAGAAGLSVGFVLF) traverse the membrane as a helical segment. At 76–1088 (GLALYLGWRR…LIDDRDKGGS (1013 aa)) the chain is on the cytoplasmic side. An SMP-LTD domain is found at 127 to 305 (DVEKAEWLNK…LPNRLLVPLV (179 aa)). C2 domains lie at 304-425 (LVPD…DNWY), 446-572 (DAEK…QLSS), 618-740 (DAPP…DEWL), and 771-888 (QVNS…ALSG). The residue at position 316 (Ser-316) is a Phosphoserine; by CDK5. Residues Lys-336, Asp-337, Asp-349, Asp-396, Asp-398, Asp-400, Asp-402, and Asp-403 each contribute to the Ca(2+) site. The interval 599–630 (TEPGAQDWDSESPETGSSVDAPPRPYHTTPNS) is disordered. Lys-806 carries the post-translational modification N6-acetyllysine. Residue Ser-809 is modified to Phosphoserine. The interval 911 to 930 (HSHSSSSLNEEPEVLGDPTH) is disordered. A phosphoserine mark is found at Ser-933 and Ser-947. In terms of domain architecture, C2 5 spans 955-1077 (PLGQVKLTVW…DLSQGAAQWY (123 aa)). Position 993 is a phosphotyrosine (Tyr-993). Residues 1002-1009 (KNRGTKRK) are required for phosphatidylinositol 4,5-bisphosphate-dependent location at the cell membrane.

This sequence belongs to the extended synaptotagmin family. As to quaternary structure, interacts with ESYT2 and ESYT3. Interacts with ADGRD1; inhibiting the G-protein-coupled receptor activity of ADGRD1. Interaction with ADGRD1 is abolished when cytosolic calcium increases, relieving ADGRD1 G-protein-coupled receptor activity. Interacts (phosphorylated form) with SLC2A4. In terms of processing, phosphorylated on Ser residues in insulin-treated adipocytes (in vitro); this promotes interaction with SLC2A4. As to expression, ubiquitously expressed with a higher expression in spleen and white adipose tissue.

The protein localises to the endoplasmic reticulum membrane. It is found in the cell membrane. Binds calcium (via the C2 domains) and translocates to sites of contact between the endoplasmic reticulum and the cell membrane in response to increased cytosolic calcium levels. Helps tether the endoplasmic reticulum to the cell membrane and promotes the formation of appositions between the endoplasmic reticulum and the cell membrane. Acts as an inhibitor of ADGRD1 G-protein-coupled receptor activity in absence of cytosolic calcium. Binds glycerophospholipids in a barrel-like domain and may play a role in cellular lipid transport. This Rattus norvegicus (Rat) protein is Extended synaptotagmin-1 (Esyt1).